Consider the following 318-residue polypeptide: Cytochrome c biogenesis protein CcsA (318 aa).

8 helical membrane passes run 17–37, 45–65, 75–95, 104–124, 149–169, 224–244, 258–275, and 287–307; these read VLALGLAAFALLLLAIPISFW, SAVVTLLVALANLVLTAQLVL, ISNLYESLCFLAWACTLAQLL, IVSAAATPMALLCVAFASFAL, VIMCSYAALLVGSFLSMAVLF, TITVGFLLLTLGLISGAVWAN, TWALICWMVYAAYLHTRF, and VAVAGIVVIVVCYIGVNLLGI.

The protein belongs to the CcmF/CycK/Ccl1/NrfE/CcsA family. May interact with ccs1.

It is found in the cellular thylakoid membrane. Its function is as follows. Required during biogenesis of c-type cytochromes (cytochrome c6 and cytochrome f) at the step of heme attachment. This chain is Cytochrome c biogenesis protein CcsA, found in Prochlorococcus marinus (strain MIT 9313).